Reading from the N-terminus, the 201-residue chain is E3 ubiquitin-protein ligase MIR1 (201 aa).

The RING-CH-type zinc-finger motif lies at 1-58; the sequence is MDSTGEFCWICHQPEGPLKRFCGCKGSCAVSHQDCLRGWLETSRRQTCALCGTPYSMK. Over 1–81 the chain is Cytoplasmic; it reads MDSTGEFCWI…EEVLAAMEAC (81 aa). Zn(2+) is bound by residues C8, C11, C22, C24, H32, C35, C48, and C51. Positions 52–79 are DIRT; the sequence is GTPYSMKWKTKPLREWTWGEEEVLAAME. Residues 82 to 102 traverse the membrane as a helical segment; it reads LPLVLIPLAVLMIVMGTWLLV. Topologically, residues 103 to 113 are extracellular; that stretch reads NHNGFLSPRMQ. A helical transmembrane segment spans residues 114 to 134; that stretch reads VVLVVIVLLAMIVFSASASYV. Residues 135–201 lie on the Cytoplasmic side of the membrane; it reads MVEGPGCLDT…RLGCVRLCCV (67 aa).

In terms of assembly, interacts with host UBE2J2.

The protein localises to the host endoplasmic reticulum membrane. It carries out the reaction [E2 ubiquitin-conjugating enzyme]-S-ubiquitinyl-L-cysteine + [acceptor protein]-L-cysteine = [E2 ubiquitin-conjugating enzyme]-L-cysteine + [acceptor protein]-S-ubiquitinyl-L-cysteine.. The protein operates within protein modification; protein ubiquitination. E3 ubiquitin-protein ligase that mediates ubiquitination of host surface class I (MHC-I) H-2D(b)/H2-D1 and H-2K(b)/H2-K1 molecules before they exit the endoplasmic reticulum, leading to their degradation by the endoplasmic reticulum-associated degradation (ERAD) system, thus blocking the immune detection of virus-infected cells. Mediates ubiquitination of lysine, as well as serine and threonine residues present in the cytoplasmic tail of surface class I molecules. Promotes ubiquitination of hydroxylated serine or threonine residues via ester bonds instead of the classical isopeptide linkage. The polypeptide is E3 ubiquitin-protein ligase MIR1 (K3) (Murid herpesvirus 4 (MuHV-4)).